A 221-amino-acid chain; its full sequence is NADH-ubiquinone oxidoreductase chain 4 (221 aa).

The next 6 membrane-spanning stretches (helical) occupy residues 5-25, 34-54, 61-81, 100-120, 140-160, and 185-205; these read YTYI…FSTL, IAYS…SNTI, IALG…AGGI, IMPI…GTPL, ILGV…IFMY, and FIML…PAPI.

Belongs to the complex I subunit 4 family.

The protein localises to the mitochondrion membrane. It catalyses the reaction a ubiquinone + NADH + 5 H(+)(in) = a ubiquinol + NAD(+) + 4 H(+)(out). In terms of biological role, core subunit of the mitochondrial membrane respiratory chain NADH dehydrogenase (Complex I) that is believed to belong to the minimal assembly required for catalysis. Complex I functions in the transfer of electrons from NADH to the respiratory chain. The immediate electron acceptor for the enzyme is believed to be ubiquinone. The chain is NADH-ubiquinone oxidoreductase chain 4 (nd4) from Emericella nidulans (Aspergillus nidulans).